Here is a 109-residue protein sequence, read N- to C-terminus: Large ribosomal subunit protein bL31B (109 aa).

Positions 79 to 109 (NVRQPAQQPQPEEDALPAAKGKKKVVTKKKK) are disordered. Positions 98-109 (KGKKKVVTKKKK) are enriched in basic residues.

The protein belongs to the bacterial ribosomal protein bL31 family. Type B subfamily. As to quaternary structure, part of the 50S ribosomal subunit.

This chain is Large ribosomal subunit protein bL31B, found in Chlamydia pneumoniae (Chlamydophila pneumoniae).